The following is a 124-amino-acid chain: Holo-[acyl-carrier-protein] synthase (124 aa).

Positions 7 and 55 each coordinate Mg(2+).

The protein belongs to the P-Pant transferase superfamily. AcpS family. Mg(2+) serves as cofactor.

Its subcellular location is the cytoplasm. The enzyme catalyses apo-[ACP] + CoA = holo-[ACP] + adenosine 3',5'-bisphosphate + H(+). Transfers the 4'-phosphopantetheine moiety from coenzyme A to a Ser of acyl-carrier-protein. This chain is Holo-[acyl-carrier-protein] synthase, found in Borrelia garinii subsp. bavariensis (strain ATCC BAA-2496 / DSM 23469 / PBi) (Borreliella bavariensis).